Reading from the N-terminus, the 273-residue chain is MTLDLQTTIEQAWENRANLSPVDASAEVRDAVEHTIDGLDLGRLRVAEKIDDQWIVHQWIKKAVLLSFRLHDNAVMGQGPLQFYDKVPTKFAGYGEAAFKAGGYRVVPPAVARRGAFIARNVVLMPSYVNIGAYVDEGTMVDTWATVGSCAQIGKNVHLSGGVGIGGVLEPLQANPTIIEDNCFIGARSEVVEGVVVEENSVLAMGVFLSQSTKIYDRATGKVSYGRVPSGSVVVPGSLPSEDGSHSLTCAVIVKRVDAQTRAKTSINDLLRA.

Substrate contacts are provided by Arg-105 and Asp-142.

The protein belongs to the transferase hexapeptide repeat family. As to quaternary structure, homotrimer.

The protein localises to the cytoplasm. The enzyme catalyses (S)-2,3,4,5-tetrahydrodipicolinate + succinyl-CoA + H2O = (S)-2-succinylamino-6-oxoheptanedioate + CoA. The protein operates within amino-acid biosynthesis; L-lysine biosynthesis via DAP pathway; LL-2,6-diaminopimelate from (S)-tetrahydrodipicolinate (succinylase route): step 1/3. The chain is 2,3,4,5-tetrahydropyridine-2,6-dicarboxylate N-succinyltransferase from Bordetella parapertussis (strain 12822 / ATCC BAA-587 / NCTC 13253).